A 1914-amino-acid chain; its full sequence is Autophagy-related protein 2 homolog A (1914 aa).

The Chorein N-terminal domain occupies 14-112 (ERVCRYLLQH…LTLQPRQGSG (99 aa)). Ser764, Ser869, Ser875, and Ser877 each carry phosphoserine. Residues 1222-1243 (DLHPPPRPPSPTEIAGQKLSES) are disordered. A phosphoserine mark is found at Ser1246, Ser1282, and Ser1290. Positions 1299–1337 (GERSGAQAPLPPPGASSHTLGSKAKEHENEEEGDGDTLD) are disordered. The segment covering 1327 to 1337 (NEEEGDGDTLD) has biased composition (acidic residues). Residues 1337–1383 (DSDEFCILDAPGLGIAPRDGEPIVTQLHPGPIIVHDGHFSQPLGSTD) are WIPI-interacting. A Phosphoserine modification is found at Ser1381. Disordered stretches follow at residues 1427-1452 (LTGP…TQGG), 1589-1634 (MVPG…SSSD), and 1803-1822 (RSLQ…QPAD). Residues 1429–1446 (GPRVSPSRSSGPNRPQNS) show a composition bias toward low complexity.

This sequence belongs to the ATG2 family. In terms of assembly, interacts with ATG9A (via C-terminus). Interacts with TMEM41B. Interacts with VMP1.

Its subcellular location is the preautophagosomal structure membrane. It localises to the lipid droplet. The protein localises to the endoplasmic reticulum membrane. The catalysed reaction is a 1,2-diacyl-sn-glycero-3-phospho-L-serine(in) = a 1,2-diacyl-sn-glycero-3-phospho-L-serine(out). It carries out the reaction a 1,2-diacyl-sn-glycero-3-phosphoethanolamine(in) = a 1,2-diacyl-sn-glycero-3-phosphoethanolamine(out). Functionally, lipid transfer protein involved in autophagosome assembly. Tethers the edge of the isolation membrane (IM) to the endoplasmic reticulum (ER) and mediates direct lipid transfer from ER to IM for IM expansion. Binds to the ER exit site (ERES), which is the membrane source for autophagosome formation, and extracts phospholipids from the membrane source and transfers them to ATG9 (ATG9A or ATG9B) to the IM for membrane expansion. Lipid transfer activity is enhanced by WIPI1 and WDR45/WIPI4, which promote ATG2A-association with phosphatidylinositol 3-monophosphate (PI3P)-containing membranes. Also regulates lipid droplets morphology and distribution within the cell. Its function is as follows. (Microbial infection) Mediates the intracellular lifestyle of Cryptococcus neoformans by supporting infection. The protein is Autophagy-related protein 2 homolog A of Mus musculus (Mouse).